The following is a 403-amino-acid chain: DNA replication and repair protein RecF (403 aa).

30–37 (GSNGLGKT) serves as a coordination point for ATP.

It belongs to the RecF family.

The protein localises to the cytoplasm. In terms of biological role, the RecF protein is involved in DNA metabolism; it is required for DNA replication and normal SOS inducibility. RecF binds preferentially to single-stranded, linear DNA. It also seems to bind ATP. The chain is DNA replication and repair protein RecF from Bifidobacterium adolescentis (strain ATCC 15703 / DSM 20083 / NCTC 11814 / E194a).